A 195-amino-acid polypeptide reads, in one-letter code: FMN-dependent NADH:quinone oxidoreductase (195 aa).

Residues serine 9, 15–17 (SVS), 85–88 (MYNF), and 129–132 (SRGG) each bind FMN.

The protein belongs to the azoreductase type 1 family. In terms of assembly, homodimer. FMN serves as cofactor.

The enzyme catalyses 2 a quinone + NADH + H(+) = 2 a 1,4-benzosemiquinone + NAD(+). It catalyses the reaction N,N-dimethyl-1,4-phenylenediamine + anthranilate + 2 NAD(+) = 2-(4-dimethylaminophenyl)diazenylbenzoate + 2 NADH + 2 H(+). Its function is as follows. Quinone reductase that provides resistance to thiol-specific stress caused by electrophilic quinones. In terms of biological role, also exhibits azoreductase activity. Catalyzes the reductive cleavage of the azo bond in aromatic azo compounds to the corresponding amines. The chain is FMN-dependent NADH:quinone oxidoreductase from Stenotrophomonas maltophilia (strain K279a).